The following is a 332-amino-acid chain: CAX-interacting protein 4 (332 aa).

Residues 33-59 form a disordered region; the sequence is GYDPYAPTSKEEPKTTQQKTEDPENSY. The span at 41–54 shows a compositional bias: basic and acidic residues; the sequence is SKEEPKTTQQKTED. The CCHC-type zinc-finger motif lies at 81–98; it reads GSCKKCGRVGHLTFQCRN. Residues 124–133 show a composition bias toward basic and acidic residues; sequence IRRGVGKGEV. The tract at residues 124 to 332 is disordered; that stretch reads IRRGVGKGEV…RKRHHRKERE (209 aa). The segment covering 134–153 has biased composition (acidic residues); the sequence is EEVSSEEEEESESSDSDVDS. Positions 154–163 are enriched in basic and acidic residues; that stretch reads EMERIIAERF. Composition is skewed to basic residues over residues 198-214 and 227-236; these read RKRR…HKRR and SKRRKERRGR. The segment covering 241 to 250 has biased composition (acidic residues); the sequence is DDSDESEDED. Composition is skewed to basic residues over residues 254–269 and 314–332; these read VKRK…RSRR and SSKR…KERE.

In terms of assembly, interacts with CAX1. As to expression, expressed in leaves, stems and roots, and at lower levels in flowers.

The protein resides in the nucleus. Functionally, may regulate CAX1 cation transporter. The sequence is that of CAX-interacting protein 4 (CXIP4) from Arabidopsis thaliana (Mouse-ear cress).